We begin with the raw amino-acid sequence, 758 residues long: MKKEKIDLFYGALLHDIGKVIQRATGERKKHALVGADWFDEIADNQVISDQIRYHMANYQSDKLGNDHLAYITYIADNIASGVDRRQSNEESDEDASAKIWDTYTNQADIFNVFGAQTDKRYFKPTVLNLKSKPNFASATYEPFSKGDYAAIATRIKNELAEFEFNQAQIDSLLNLFEAILSFVPSSTNSKEIADISLAEHSRLTAAFALAIYDYLEDKGRHNYKEDLFTKASAFYEEEAFLLASFDLSGIQDFIYNIATSGAAKQLKARSLYLDFMSEYIADSLLDKLGLNRANLLYVGGGHAYFVLANTEKTVETLVQFEKDFNQFLLANFQTRLYVAFGWGSFAAKDIMSELNSPESYRQIYQKASRMISEKKISRYDYRTLMLLNRGGKSSERECEICHSVENLVSYHDQKVCDICRGLYQFSKEIAHDHFIITENEGLPIGPNACLKGVAFEKLSQESFSRVYVKNDYKAGTIKATHVFVGDYQCDEIHKYAALSKNEDGLGIKRLAVVRLDVDDLGAAFMAGFSRQGNGQYSTLSRSATFSRSMSLFFKVYINQFASDKKLSIIYAGGDDVFAIGSWQDIIAFTVELRQNFIKWTNGKLTLSAGIGLFADKTPISLMAHQTGELEEAAKGNEKDSISLFSSDYTFKFDRFITNVYDDKLEQIRYFFNHQDERGKNFIYKLIELLRNYESEEKMNVARLAYYLTRLEELTDKDERDKFKQFKKLFFKWYTNNESDRKEAELALLLYVYEIRKD.

Residues 1–82 (MKKEKIDLFY…TYIADNIASG (82 aa)) are HD domain. The 139-residue stretch at 509-647 (KRLAVVRLDV…EKDSISLFSS (139 aa)) folds into the GGDEF domain.

It belongs to the CRISPR-associated Cas10/Csm1 family. As to quaternary structure, part of the Csm effector complex that includes at least Cas10(1), Csm2(3), Csm3(5), Csm4(1), Csm5(1) and mature crRNA. The Csm complex is elongated and slightly twisted with a maximal length of 215 Angstroms and a diameter of 75-80 Angstroms. It has been modeled to have a central protein filamant of Csm3 subunits along which the dsRNA helix of paired crRNA and target RNA binds. The filament is capped at one end by Cas10 and Csm4 and at the other end by Csm5; ssDNA is thought to bind to the N-terminal HD domain of Cas10. Csm with a precursor crRNA does not include Csm5, while Cas6, the enzyme probably involved in pre-crRNA processing, is found associated with a subset of the Csm complex. It depends on a divalent metal cation as a cofactor.

The catalysed reaction is 6 ATP = cyclic hexaadenylate + 6 diphosphate. Its activity is regulated as follows. ssDNase activity is activated by target RNA binding to the Csm-crRNA complex and is inhibited by EDTA. Its function is as follows. CRISPR (clustered regularly interspaced short palindromic repeat) is an adaptive immune system that provides protection against mobile genetic elements (viruses, transposable elements and conjugative plasmids). CRISPR clusters contain spacers, sequences complementary to antecedent mobile elements, and target invading nucleic acids. CRISPR clusters are transcribed and processed into CRISPR RNA (crRNA). The type III-A Csm effector complex binds crRNA and acts as a crRNA-guided RNase, DNase and cyclic oligoadenylate synthase; binding of target RNA cognate to the crRNA is required for all activities. In a heterologous host this Csm effector complex restricts ssRNA phage MS2, suggesting it may target RNA viruses in vivo. In terms of biological role, csm functions as a non-specific ssDNase. Base-pairing between crRNA and target RNA to form a ternary Csm complex activates a ssDNase activity; target RNA cleavage suppresses the ssDNase, a temporal control that prevents uncontrolled DNA degradation. Viral RNA transcripts probably tether the Csm complex to the viral genome, recruiting Cas10 ssDNA activity which is able to degrade DNA in the transcription bubble, spatially controlling the DNase activity. Functionally, this subunit has a weak ssDNase activity that is dramatically activated by the ternary Csm effector complex (the crRNA, Cas proteins and a cognate target ssRNA). Target RNA and ssDNA are cleaved simultaneously, although RNase activity (of Csm3) is much faster. RNA cleavage by Csm3 is not required for ssDNase activity as Csm complex with inactive Csm3 still has ssDNase activity; however as the cleaved target RNA products dissociate away ssDNase activity decreases. Self-recognition, with subsequent repression of the ssDNase activity, occurs when the 5' handle of the crRNA bases pairs with the 3' flanking sequence of the target RNA (which would occur if the CRISPR locus were transcribed as an anti-pre-crRNA). This protein has low activity on dsDNA which is not stimulated by the Csm complex. This subunit is a single-strand-specific deoxyribonuclease (ssDNase) which digests both linear and circular ssDNA; it has both exo- and endonuclease activity. Its function is as follows. When associated with the ternary Csm effector complex (the crRNA, Cas proteins and a cognate target ssRNA) synthesizes cyclic oligoadenylates (cOA) from ATP, producing cyclic triadenylate (cA3) up to cyclic hexaadenylate (cA6), which is the active cOA. The enzyme is also able to cyclize pppA3 up to pppA6. cOAs are second messengers that induce an antiviral state important for defense against invading nucleic acids. Synthesis of cOA can occur with AMP plus ATP, 2'dATP or 3'dATP (but no other nucleotides), and requires a free 3'-OH ribose moiety. The sequence is that of CRISPR system single-strand-specific deoxyribonuclease Cas10/Csm1 (subtype III-A) from Streptococcus thermophilus.